The following is a 190-amino-acid chain: UPF0301 protein Psyr_0485 (190 aa).

This sequence belongs to the UPF0301 (AlgH) family.

This is UPF0301 protein Psyr_0485 from Pseudomonas syringae pv. syringae (strain B728a).